The following is a 115-amino-acid chain: Large ribosomal subunit protein bL19 (115 aa).

This sequence belongs to the bacterial ribosomal protein bL19 family.

This protein is located at the 30S-50S ribosomal subunit interface and may play a role in the structure and function of the aminoacyl-tRNA binding site. This is Large ribosomal subunit protein bL19 from Francisella tularensis subsp. tularensis (strain FSC 198).